A 946-amino-acid chain; its full sequence is Bifunctional glutamine synthetase adenylyltransferase/adenylyl-removing enzyme (946 aa).

An adenylyl removase region spans residues 1–440 (MKPLSSPLQQ…VFNELIGDDE (440 aa)). The adenylyl transferase stretch occupies residues 449–946 (SEQWRELWQD…ASWQKWLVEE (498 aa)).

This sequence belongs to the GlnE family. Mg(2+) is required as a cofactor.

The catalysed reaction is [glutamine synthetase]-O(4)-(5'-adenylyl)-L-tyrosine + phosphate = [glutamine synthetase]-L-tyrosine + ADP. The enzyme catalyses [glutamine synthetase]-L-tyrosine + ATP = [glutamine synthetase]-O(4)-(5'-adenylyl)-L-tyrosine + diphosphate. Functionally, involved in the regulation of glutamine synthetase GlnA, a key enzyme in the process to assimilate ammonia. When cellular nitrogen levels are high, the C-terminal adenylyl transferase (AT) inactivates GlnA by covalent transfer of an adenylyl group from ATP to specific tyrosine residue of GlnA, thus reducing its activity. Conversely, when nitrogen levels are low, the N-terminal adenylyl removase (AR) activates GlnA by removing the adenylyl group by phosphorolysis, increasing its activity. The regulatory region of GlnE binds the signal transduction protein PII (GlnB) which indicates the nitrogen status of the cell. This chain is Bifunctional glutamine synthetase adenylyltransferase/adenylyl-removing enzyme, found in Escherichia coli O81 (strain ED1a).